Here is a 261-residue protein sequence, read N- to C-terminus: Histone H1-I (261 aa).

The span at 1–22 (MSETEAAPVVAPAAEAAPAAEA) shows a compositional bias: low complexity. Disordered regions lie at residues 1 to 63 (MSET…PPYI) and 125 to 261 (FKLS…KGKK). A compositionally biased stretch (basic and acidic residues) spans 41–50 (APKEPKAPKE). One can recognise an H15 domain in the interval 58-129 (THPPYIEMVK…KVKGSFKLSE (72 aa)). The span at 133–142 (AKAKKSTPKK) shows a compositional bias: basic residues. Repeat copies occupy residues 136 to 140 (KKSTP) and 188 to 192 (KKATP). Residues 136 to 250 (KKSTPKKAKA…KKAPAKKSTP (115 aa)) are 7 X 5 AA repeats of K-K-[AS]-T-P. The DNA-binding element occupies 139-142 (TPKK). The span at 143–198 (AKADGEAKPKKSEAKPKKAEAVKKTKAPKEKVERPKKEKKEKVEKKKATPKAEKPK) shows a compositional bias: basic and acidic residues. One copy of the 3; approximate repeat lies at 199-203 (KAATP). A run of 4 repeats spans residues 209 to 213 (KKATP), 230 to 234 (KKATP), 236 to 240 (KKAAP), and 246 to 250 (KKSTP). A compositionally biased stretch (basic residues) spans 227 to 250 (AKPKKATPSKKAAPKKAPAKKSTP). Basic and acidic residues predominate over residues 251-261 (KAKEAKSKGKK).

This sequence belongs to the histone H1/H5 family.

Its subcellular location is the nucleus. The protein localises to the chromosome. Its function is as follows. Histones H1 are necessary for the condensation of nucleosome chains into higher-order structures. The sequence is that of Histone H1-I (H1-I) from Volvox carteri (Green alga).